Here is a 740-residue protein sequence, read N- to C-terminus: MTVKLDFEECLKDSPRFRASIELVEAEVSELETRLEKLLKLGTGLLESGRHYLAASRAFVVGICDLARLGPPEPMMAECLEKFTVSLNHKLDSHAELLDATQHTLQQQIQTLVKEGLRGFREARRDFWRGAESLEAALTHNAEVPRRRAQEAEEAGAALRTARAGYRGRALDYALQINVIEDKRKFDIMEFVLRLVEAQATHFQQGHEELSRLSQYRKELGAQLHQLVLNSAREKRDMEQRHVLLKQKELGGEEPEPSLREGPGGLVMEGHLFKRASNAFKTWSRRWFTIQSNQLVYQKKYKDPVTVVVDDLRLCTVKLCPDSERRFCFEVVSTSKSCLLQADSERLLQLWVSAVQSSIASAFSQARLDDSPRGPGQGSGHLAIGSAATLGSGGMARGREPGGVGHVVAQVQSVDGNAQCCDCREPAPEWASINLGVTLCIQCSGIHRSLGVHFSKVRSLTLDSWEPELVKLMCELGNVIINQIYEARVEAMAVKKPGPSCSRQEKEAWIHAKYVEKKFLTKLPEIRGRRGGRGRPRGQPPVPPKPSIRPRPGSLRSKPEPPSEDLGSLHPGALLFRASGHPPSLPTMADALAHGADVNWVNGGQDNATPLIQATAANSLLACEFLLQNGANVNQADSAGRGPLHHATILGHTGLACLFLKRGADLGARDSEGRDPLTIAMETANADIVTLLRLAKMREAEAAQGQAGDETYLDIFRDFSLMASDDPEKLSRRSHDLHTL.

Positions 1-226 (MTVKLDFEEC…RKELGAQLHQ (226 aa)) constitute a BAR domain. The required for formation of endosomal tubules when overexpressed with PIP5K1C stretch occupies residues 1–382 (MTVKLDFEEC…RGPGQGSGHL (382 aa)). In terms of domain architecture, PH spans 265 to 360 (GLVMEGHLFK…WVSAVQSSIA (96 aa)). The Arf-GAP domain maps to 405 to 527 (GHVVAQVQSV…KFLTKLPEIR (123 aa)). The required for interaction with GULP1 stretch occupies residues 405–740 (GHVVAQVQSV…SRRSHDLHTL (336 aa)). The C4-type zinc finger occupies 420–443 (CCDCREPAPEWASINLGVTLCIQC). Tyr-485 carries the 3'-nitrotyrosine modification. Residues 525-566 (EIRGRRGGRGRPRGQPPVPPKPSIRPRPGSLRSKPEPPSEDL) are prevents interaction with ITGB1 when S-554 is not phosphorylated. Residues 525-581 (EIRGRRGGRGRPRGQPPVPPKPSIRPRPGSLRSKPEPPSEDLGSLHPGALLFRASGH) are disordered. Residues 538–549 (GQPPVPPKPSIR) are compositionally biased toward pro residues. At Ser-554 the chain carries Phosphoserine; by PKB. 3 ANK repeats span residues 606–635 (DNAT…NVNQ), 639–668 (AGRG…DLGA), and 672–702 (EGRD…EAEA).

Banana-shaped homodimer laterally assembling into tetramers, the tetramers further pack helically onto the membrane. Interacts with GTP-bound ARF6. Interacts with third cytoplasmic loop of SLC2A4/GLUT4. Interacts with CLTC. Interacts with GULP1. Forms a complex with GDP-bound ARF6 and GULP1. Interacts with ITGB1; required for ITGB1 recycling. Phosphorylation at Ser-554 by PKB is required for interaction with ITGB1, export of ITGB1 from recycling endosomes to the cell surface and ITGB1-dependent cell migration. In terms of tissue distribution, highest level in lung and spleen. Low level in heart, kidney, liver and pancreas.

It localises to the recycling endosome membrane. Its activity is regulated as follows. GAP activity stimulated by phosphatidylinositol 4,5-bisphosphate (PIP2) and phosphatidic acid. GTPase-activating protein (GAP) for ADP ribosylation factor 6 (ARF6) required for clathrin-dependent export of proteins from recycling endosomes to trans-Golgi network and cell surface. Required for regulated export of ITGB1 from recycling endosomes to the cell surface and ITGB1-dependent cell migration. The protein is Arf-GAP with coiled-coil, ANK repeat and PH domain-containing protein 1 (ACAP1) of Homo sapiens (Human).